Consider the following 208-residue polypeptide: MSSGDFGNPLRKFKLVFLGEQSVGKTSLITRFMYDSFDNTYQATIGIDFLSKTMYLEDRTVRLQLWDTAGQERFRSLIPSYIRDSTVAVVVYDITNTNSFHQTSKWIDDVRTERGSDVIIMLVGNKTDLSDKRQVSTEEGERKAKELNVMFIETSAKAGYNVKQLFRRVAAALPGMDSTENKPSEDMQEVVLKDSPNETKDPEGGCAC.

Residue 19 to 27 (GEQSVGKTS) coordinates GTP. An Effector region motif is present at residues 41–49 (YQATIGIDF). GTP-binding positions include 67–71 (DTAGQ), 125–128 (NKTD), and 155–157 (SAK). Positions 176–208 (MDSTENKPSEDMQEVVLKDSPNETKDPEGGCAC) are disordered. Positions 179-208 (TENKPSEDMQEVVLKDSPNETKDPEGGCAC) are enriched in basic and acidic residues.

The protein belongs to the small GTPase superfamily. Rab family. In terms of assembly, interacts with Rich and Act5C. Interacts with BicD (via C-terminal domain). Interacts (in GTP-bound) with GCC1/CG10703 and cbs. Interacts with Gorab (via C-terminus); binds to a Gorab homodimer, this interaction seems to be required for trans-Golgi localization of Gorab. As to expression, expressed in larval eye, wing and leg imaginal disks and in salivary gland. Expressed in the larval optic lobe, showing an enrichment in the neuropil. In the adult brain, expressed in photoreceptors and mushroom body.

The protein localises to the golgi apparatus membrane. It localises to the synapse. Its subcellular location is the perikaryon. In terms of biological role, protein transport. Regulator of membrane traffic from the Golgi apparatus towards the endoplasmic reticulum (ER). Mediates membrane trafficking during egg chamber growth and organization, possibly upstream of exocyst component Sec5. Also during oogenesis, plays a role, together with BicD but independently of Sec5, in the polarization of the oocyte microtubule cytoskeleton, in the localization of oskar mRNA and in the anterodorsal secretion of grk. Required for anterograde opsin transport through the ER-Golgi complex. Plays a role, together with Rich, in regulating CadN transport in photoreceptor cells which is required for the formation of normal synaptic connections between axons from the inner photoreceptor cells in the eye and postsynaptic cells in the brain medulla layer M6. Necessary for proper development of bristle shafts of macrochaete and microchaete on the head, thorax and scutellum. Modulates Notch signaling. As a key regulator of vesicular traffic, plays a critical role in the regulation of actin organization and is required for normal rates of phagocytic uptake during phagocytosis involved in defense against viral and fungal infection. The chain is Ras-related protein Rab6 from Drosophila melanogaster (Fruit fly).